Consider the following 259-residue polypeptide: 7alpha-hydroxysteroid dehydrogenase (259 aa).

Residues Ile-18, 37 to 38, and Asn-90 each bind NAD(+); that span reads DY. Glycochenodeoxycholate is bound by residues Ser-145 and Tyr-158. Residues Tyr-158, Lys-162, and 191-193 contribute to the NAD(+) site; that span reads ILT. Tyr-158 serves as the catalytic Proton acceptor.

It belongs to the short-chain dehydrogenases/reductases (SDR) family. In terms of assembly, homotetramer.

The catalysed reaction is cholate + NAD(+) = 3alpha,12alpha-dihydroxy-7-oxo-5beta-cholanate + NADH + H(+). It carries out the reaction chenodeoxycholate + NAD(+) = 7-oxolithocholate + NADH + H(+). It catalyses the reaction taurochenodeoxycholate + NAD(+) = 7-oxotaurolithocholate + NADH + H(+). The enzyme catalyses glycochenodeoxycholate + NAD(+) = 7-oxoglycolithocholate + NADH + H(+). The catalysed reaction is taurocholate + NAD(+) = 7-oxo-taurodeoxycholate + NADH + H(+). It carries out the reaction glycocholate + NAD(+) = 7-oxo-glycodeoxycholate + NADH + H(+). It catalyses the reaction an aromatic primary alcohol + NAD(+) = an aromatic aldehyde + NADH + H(+). The enzyme catalyses benzyl alcohol + NAD(+) = benzaldehyde + NADH + H(+). The catalysed reaction is 4-cyanobenzyl alcohol + NAD(+) = 4-cyanobenzaldehyde + NADH + H(+). It carries out the reaction 4-acetoxybenzyl alcohol + NAD(+) = 4-acetoxybenzaldehyde + NADH + H(+). It catalyses the reaction 4-(trifluoromethyl)benzyl alcohol + NAD(+) = 4-(trifluoromethyl)benzaldehyde + NADH + H(+). In terms of biological role, 7alpha-hydroxysteroid dehydrogenase involved in the metabolism of bile acids in the gut. Catalyzes the NAD(+)-dependent oxidation of the 7alpha-hydroxy group of 7alpha-hydroxysteroids, such as cholate, chenodeoxycholate, taurochenodeoxycholate, glycochenodeoxycholate, taurocholate and glycocholate, to the corresponding 7-oxosteroids. Since it is also able to catalyze the reduction of nonsteroidal carbonyl compounds such as various benzaldehyde analogs to their corresponding benzyl alcohols, this enzyme may also function in the detoxification of xenobiotics containing carbonyl groups in the large intestine. In Bacteroides fragilis (strain ATCC 25285 / DSM 2151 / CCUG 4856 / JCM 11019 / LMG 10263 / NCTC 9343 / Onslow / VPI 2553 / EN-2), this protein is 7alpha-hydroxysteroid dehydrogenase.